The chain runs to 1079 residues: Adhesion G-protein coupled receptor F3 (1079 aa).

Residues 1-25 form the signal peptide; that stretch reads MVCSAAPLLLLATTLPLLGSPVAQA. Residues 26-775 are Extracellular-facing; the sequence is SQPVSETGVR…EEPALALLTQ (750 aa). 6 N-linked (GlcNAc...) asparagine glycosylation sites follow: Asn-188, Asn-264, Asn-301, Asn-382, Asn-441, and Asn-648. A GAIN-B domain is found at 599–765; the sequence is HPFAFSLPNV…SVLMSPHTVP (167 aa). 2 disulfide bridges follow: Cys-715/Cys-747 and Cys-734/Cys-749. The tract at residues 715–765 is GPS; it reads CVFWDHSLFQGRGGWSKEGCQAQVASASPTAQCLCQHLTAFSVLMSPHTVP. The chain crosses the membrane as a helical span at residues 776-796; that stretch reads VGLGASILALLVCLGVYWLVW. The Cytoplasmic portion of the chain corresponds to 797 to 811; the sequence is RVVVRNKISYFRHAA. Residues 812-832 form a helical membrane-spanning segment; the sequence is LLNMVFCLLAADTCFLGAPFL. Residues 833-851 are Extracellular-facing; sequence SPGPRSPLCLAAAFLCHFL. Residues 852-874 traverse the membrane as a helical segment; sequence YLATFFWMLAQALVLAHQLLFVF. The Cytoplasmic portion of the chain corresponds to 875–881; it reads HQLAKHR. Residues 882–902 form a helical membrane-spanning segment; that stretch reads VLPLMVLLGYLCPLGLAGVTL. Over 903–928 the chain is Extracellular; sequence GLYLPQGQYLREGECWLDGKGGALYT. The chain crosses the membrane as a helical span at residues 929-949; sequence FVGPVLAIIGVNGLVLAMAML. Residues 950–973 lie on the Cytoplasmic side of the membrane; the sequence is KLLRPSLSEGPPAEKRQALLGVIK. The chain crosses the membrane as a helical span at residues 974 to 994; that stretch reads ALLILTPIFGLTWGLGLATLL. Over 995 to 1002 the chain is Extracellular; sequence EEVSTVPH. Residues 1003 to 1023 form a helical membrane-spanning segment; it reads YIFTILNTLQGVFILLFGCLM. Over 1024–1079 the chain is Cytoplasmic; it reads DRKIQEALRKRFCRAQAPSSTISLVSCCLQILSCASKSMSEGIPWPSSEDMGTARS.

The protein belongs to the G-protein coupled receptor 2 family. Adhesion G-protein coupled receptor (ADGR) subfamily. As to quaternary structure, heterodimer of 2 chains generated by proteolytic processing; the large extracellular N-terminal fragment and the membrane-bound C-terminal fragment predominantly remain associated and non-covalently linked. Post-translationally, autoproteolytically processed at the GPS region of the GAIN-B domain; this cleavage modulates receptor activity.

The protein localises to the membrane. Functionally, orphan receptor. The sequence is that of Adhesion G-protein coupled receptor F3 (ADGRF3) from Homo sapiens (Human).